The chain runs to 933 residues: Bifunctional uridylyltransferase/uridylyl-removing enzyme (933 aa).

Positions 1-379 (MAKISLKLDE…TFQRRKRKLA (379 aa)) are uridylyltransferase. A uridylyl-removing region spans residues 380–736 (GTSDFIVDNH…VKTHQFEAVT (357 aa)). The HD domain occupies 496 to 619 (VDEHLIRCIG…VQSVERLKLL (124 aa)). ACT domains lie at 737-818 (EITV…EMIE) and 848-922 (VIEV…GIAP).

Belongs to the GlnD family. It depends on Mg(2+) as a cofactor.

The catalysed reaction is [protein-PII]-L-tyrosine + UTP = [protein-PII]-uridylyl-L-tyrosine + diphosphate. It carries out the reaction [protein-PII]-uridylyl-L-tyrosine + H2O = [protein-PII]-L-tyrosine + UMP + H(+). Uridylyltransferase (UTase) activity is inhibited by glutamine, while glutamine activates uridylyl-removing (UR) activity. In terms of biological role, modifies, by uridylylation and deuridylylation, the PII regulatory proteins (GlnB and homologs), in response to the nitrogen status of the cell that GlnD senses through the glutamine level. Under low glutamine levels, catalyzes the conversion of the PII proteins and UTP to PII-UMP and PPi, while under higher glutamine levels, GlnD hydrolyzes PII-UMP to PII and UMP (deuridylylation). Thus, controls uridylylation state and activity of the PII proteins, and plays an important role in the regulation of nitrogen fixation and metabolism. In Mesorhizobium japonicum (strain LMG 29417 / CECT 9101 / MAFF 303099) (Mesorhizobium loti (strain MAFF 303099)), this protein is Bifunctional uridylyltransferase/uridylyl-removing enzyme.